The sequence spans 534 residues: N-acetylglutamate synthase, mitochondrial (534 aa).

Residues 1-18 (MATALMAVVLRAAAVAPR) constitute a mitochondrion transit peptide. The interval 19-99 (LRGRGGTGGA…HESPEPPSGR (81 aa)) is disordered. Residues 19–376 (LRGRGGTGGA…SGTLFKNAER (358 aa)) form an amino-acid kinase domain (AAK) region. The span at 81–96 (VPSPRPPVPHESPEPP) shows a compositional bias: pro residues. Residues 375–526 (ERMLRVRSLD…HAKGLPDSFH (152 aa)) enclose the N-acetyltransferase domain. Residues Lys401, Lys444, and 474–479 (RSRVTN) contribute to the substrate site.

It belongs to the acetyltransferase family. Homodimer. Homotetramer. In terms of processing, probably processed by mitochondrial processing peptidase (MPP). The long form has not yet been isolated. As to expression, highly expressed in the adult liver, kidney and small intestine. Weakly expressed in the fetal liver, lung, pancreas, placenta, heart and brain tissue.

It is found in the mitochondrion matrix. The enzyme catalyses L-glutamate + acetyl-CoA = N-acetyl-L-glutamate + CoA + H(+). It functions in the pathway amino-acid biosynthesis; L-arginine biosynthesis; N(2)-acetyl-L-ornithine from L-glutamate: step 1/4. With respect to regulation, increased by L-arginine. In terms of biological role, plays a role in the regulation of ureagenesis by producing the essential cofactor N-acetylglutamate (NAG), thus modulating carbamoylphosphate synthase I (CPS1) activity. The chain is N-acetylglutamate synthase, mitochondrial (NAGS) from Homo sapiens (Human).